A 492-amino-acid polypeptide reads, in one-letter code: MASADVFKANVEAVTRDYICEPRIEYRTVGGVSGPLVVVELVKRPKFAEIVNIRLGNGTSRRGQVLEVDGNRAVVQVFEGTSGIDNRNTTLQFTGEVLSTPVSKDMLGRVFNGSGKPIDGGPPVLAEAYLDIQGSSINPSERTYPEEMIQTGVSTIDVMNSIARGQKIPLFSAAGLPHNDIAAQICRQAGLVKRGNQDSMIDAGHEEEEFAIVFAAMGVNMETAHYFKQDFEENGSMEKTVLFLNLANDPTIERIITPRIALTTAEYLAYECGKHVLVILTDMSSYADALREVSAAREEVPGRRGYPGYMYTDLATIYERAGRIEGRKGSITQLPILTMPNDDITHPIPDLTGYITEGQIYVDRQLHNRQIYPPINVLPSLSRLMKSAIGEGMTRKDHSEVSNQLYANYAIGKDVAAMKAVVGEEALSSEDLLYLEFLDKFERKFVNQGHYEARTIFDSLDLAWTLLRLFPKELLRRITAKTLEKMYERSES.

This sequence belongs to the ATPase alpha/beta chains family. As to quaternary structure, V-ATPase is a heteromultimeric enzyme composed of a peripheral catalytic V1 complex (main components: subunits A, B, C, D, E, and F) attached to an integral membrane V0 proton pore complex (main component: the proteolipid protein).

In terms of biological role, non-catalytic subunit of the peripheral V1 complex of vacuolar ATPase. V-ATPase is responsible for acidifying a variety of intracellular compartments in eukaryotic cells. The protein is V-type proton ATPase subunit B 1 of Acetabularia acetabulum (Mermaid's wine glass).